The chain runs to 23 residues: 48 kDa cell wall protein (23 aa).

The protein localises to the secreted. The protein resides in the cell wall. In Nicotiana tabacum (Common tobacco), this protein is 48 kDa cell wall protein.